We begin with the raw amino-acid sequence, 189 residues long: Ribosomal RNA large subunit methyltransferase E (189 aa).

Positions 45, 47, 64, 82, and 104 each coordinate S-adenosyl-L-methionine. Lys144 acts as the Proton acceptor in catalysis.

This sequence belongs to the class I-like SAM-binding methyltransferase superfamily. RNA methyltransferase RlmE family.

Its subcellular location is the cytoplasm. The enzyme catalyses uridine(2552) in 23S rRNA + S-adenosyl-L-methionine = 2'-O-methyluridine(2552) in 23S rRNA + S-adenosyl-L-homocysteine + H(+). Specifically methylates the uridine in position 2552 of 23S rRNA at the 2'-O position of the ribose in the fully assembled 50S ribosomal subunit. The chain is Ribosomal RNA large subunit methyltransferase E from Borreliella afzelii (strain PKo) (Borrelia afzelii).